The primary structure comprises 314 residues: Acetaldehyde dehydrogenase 1 (314 aa).

15 to 18 lines the NAD(+) pocket; sequence SGNI. The active-site Acyl-thioester intermediate is the Cys133. Residues 164-172 and Asn291 contribute to the NAD(+) site; that span reads SAGPGTRAN.

Belongs to the acetaldehyde dehydrogenase family.

The enzyme catalyses acetaldehyde + NAD(+) + CoA = acetyl-CoA + NADH + H(+). This is Acetaldehyde dehydrogenase 1 from Paraburkholderia xenovorans (strain LB400).